A 642-amino-acid chain; its full sequence is Sodium-dependent phosphate transport protein 2A (642 aa).

Residues 1 to 106 are Cytoplasmic-facing; sequence MISYGEQLSS…LRRTAMTLLK (106 aa). A phosphoserine mark is found at Ser14 and Ser37. Residues 107–128 form a helical membrane-spanning segment; the sequence is LPLMVTFLYLFVCSLDVLSSAF. The Extracellular portion of the chain corresponds to 129 to 148; sequence QLAGGKVAGDIFKDNAILAN. A helical transmembrane segment spans residues 149 to 166; it reads PVAGLVVGILVTVLVQSS. Over 167–168 the chain is Cytoplasmic; it reads ST. Residues 169-188 form a helical membrane-spanning segment; sequence ATSIIVSMVSSGLLEVSSAI. The Extracellular segment spans residues 189-350; the sequence is PIIMGSNIGT…HIFVDTQLPD (162 aa). 2 disulfide bridges follow: Cys228/Cys525 and Cys309/Cys339. Residues Asn301, Asn326, and Asn333 are each glycosylated (N-linked (GlcNAc...) asparagine). The chain crosses the membrane as a helical span at residues 351–373; sequence LAVGLILLAGSLVLLCTCLILLV. Topologically, residues 374-415 are cytoplasmic; the sequence is KMLNSLLKGQVAKVIQKVINTDLPAPFTWVTGYFAMVVGAAM. Residues 416–439 form a helical membrane-spanning segment; sequence TFIVQSSSVFTSAITPLVGLGVIS. Residues 440 to 469 lie on the Extracellular side of the membrane; it reads IERAYPLTLGSNIGTTTTAILAALASPREK. Residues 470-490 form a helical membrane-spanning segment; sequence LSSSFQIALCHFFFNISGILL. Residues 491–516 lie on the Cytoplasmic side of the membrane; sequence WYPLPCTRLPIRMAKALGKRTAKYRW. Thr511 carries the phosphothreonine; by PKC modification. The chain crosses the membrane as a helical span at residues 517 to 537; sequence FAVLYLLVCFLLLPSLVFGIS. The Extracellular portion of the chain corresponds to 538–542; that stretch reads MAGWR. Residues 543–564 traverse the membrane as a helical segment; the sequence is AMVGVGAPFGALLAFVVLINVL. The Cytoplasmic portion of the chain corresponds to 565 to 642; that stretch reads QSRSPGRLPK…LPAHHNATRL (78 aa). Phosphoserine is present on Ser610. The residue at position 626 (Thr626) is a Phosphothreonine. Ser628 is modified (phosphoserine).

It belongs to the SLC34A transporter family. In terms of assembly, interacts via its C-terminal region with NHERF4. Interacts with NHERF1. Interacts with TMEM174; regulates SLC34A1 internalization by PTH and FGF23. Expressed in the kidney cortex.

It localises to the apical cell membrane. The protein localises to the cell membrane. It carries out the reaction 3 Na(+)(out) + phosphate(out) = 3 Na(+)(in) + phosphate(in). Transport activity is significantly increased in response to dietary phosphate deprivation. In terms of biological role, involved in actively transporting phosphate into cells via Na(+) cotransport in the renal brush border membrane. The cotransport has a Na(+):Pi stoichiometry of 3:1 and is electrogenic. This Oryctolagus cuniculus (Rabbit) protein is Sodium-dependent phosphate transport protein 2A.